Reading from the N-terminus, the 372-residue chain is MTSIEPTHTGKKVIVGMSGGVDSSVSAYLLMQQGYQVEGLFMKNWEEDDNDEYCAAAEDLKDAQAVCDKLGIKLHTVNFAAEYWDNVFEYFLAEYKAGRTPNPDIMCNKEIKFKAFLEFADDILDADYIAMGHYVRRRDNEDGTTQMLRGVDNNKDQSYFLYTLSHEQVARSLFPVGELEKHEVREIAKQMGLITHDKKDSTGICFIGERKFTEFLGNYLPAQPGNIETADGEVIGTHQGLMYHTLGQRKGLGIGGMKNSNDDPWYVVDKDLKRNVLVVGQGGHHPRLMSNGMLVNQLHWVDRKGPINGSQIVVKTRYRQQDIPCTLTYLDDNTLKVVFDEPVAAVTPGQSAVFYDGEVCLGGGIIDQLIRG.

Residues 16 to 23 and Met42 contribute to the ATP site; that span reads GMSGGVDS. Residues 102–104 are interaction with target base in tRNA; sequence NPD. The active-site Nucleophile is Cys107. Cysteines 107 and 205 form a disulfide. ATP is bound at residue Gly132. The segment at 155–157 is interaction with tRNA; the sequence is KDQ. Cys205 acts as the Cysteine persulfide intermediate in catalysis. Positions 317-318 are interaction with tRNA; sequence RY.

It belongs to the MnmA/TRMU family.

It localises to the cytoplasm. It carries out the reaction S-sulfanyl-L-cysteinyl-[protein] + uridine(34) in tRNA + AH2 + ATP = 2-thiouridine(34) in tRNA + L-cysteinyl-[protein] + A + AMP + diphosphate + H(+). Functionally, catalyzes the 2-thiolation of uridine at the wobble position (U34) of tRNA, leading to the formation of s(2)U34. This is tRNA-specific 2-thiouridylase MnmA from Shewanella oneidensis (strain ATCC 700550 / JCM 31522 / CIP 106686 / LMG 19005 / NCIMB 14063 / MR-1).